Here is a 380-residue protein sequence, read N- to C-terminus: L-lactate dehydrogenase (380 aa).

One can recognise an FMN hydroxy acid dehydrogenase domain in the interval 1–380; sequence MIISSASDYR…DASILVKAVA (380 aa). Position 24 (Tyr-24) interacts with substrate. FMN-binding residues include Ser-106 and Gln-127. Tyr-129 is a binding site for substrate. Residue Thr-155 participates in FMN binding. Arg-164 is a substrate binding site. Lys-251 is an FMN binding site. His-275 (proton acceptor) is an active-site residue. Arg-278 contacts substrate. 306 to 330 contacts FMN; sequence DSGIRSGLDVVRMLALGAKGVLLGR.

This sequence belongs to the FMN-dependent alpha-hydroxy acid dehydrogenase family. As to quaternary structure, homotetramer. It depends on FMN as a cofactor.

It is found in the cell inner membrane. The catalysed reaction is (S)-lactate + A = pyruvate + AH2. Catalyzes the conversion of L-lactate to pyruvate. Is coupled to the respiratory chain. The sequence is that of L-lactate dehydrogenase from Pseudomonas syringae pv. syringae (strain B728a).